We begin with the raw amino-acid sequence, 198 residues long: Protein XA-1 (198 aa).

The N-terminal stretch at 1–18 (MFFYVLLLALMAQGWSLP) is a signal peptide. Positions 17–198 (LPQGKTGEDS…KHGQEQGKKH (182 aa)) are disordered. Residues 29 to 44 (FRPPSPPMGPSLPPPV) show a composition bias toward pro residues. Over residues 46 to 59 (HDLHRPSGHPEEFR) the composition is skewed to basic and acidic residues. Basic residues predominate over residues 76–86 (GRPKRDLHHGK). A compositionally biased stretch (basic and acidic residues) spans 95 to 104 (HTGEVLHHTD). Positions 134-145 (HGRHRRDLHHGK) are enriched in basic residues. The segment covering 181-198 (NSSEEKRPKHGQEQGKKH) has biased composition (basic and acidic residues).

Expressed in the periphery of the cement gland as well as in the region of the hatching gland.

It localises to the secreted. The sequence is that of Protein XA-1 from Xenopus laevis (African clawed frog).